Consider the following 153-residue polypeptide: Movement protein TGB3 (153 aa).

Over 1–50 the chain is Cytoplasmic; sequence MEAPAITHSSGCVCSDCQWSGSPTVDTKVYLGSGTHANTTKTRETSFLSV. Residues 51–71 form a helical membrane-spanning segment; that stretch reads LNDNAWLFVIAALILCLYFII. Over 72-127 the chain is Lumenal; that stretch reads SKPHVDAVYTEFHQDLNGFSMKLAPGVPIDPKVIAAVKNWQKYPFGTDPRENMVTS. The chain crosses the membrane as a helical span at residues 128 to 148; sequence IVSGLRHSFCILLLVVVLLVY. At 149–153 the chain is on the cytoplasmic side; that stretch reads VCHKP.

It belongs to the virgaviridae TGB3 movement protein family. Interacts with movement proteins TGB1 and TGB2. TGB1-TGB3-TGB2 complex formation is enhanced by ATP hydrolysis.

It is found in the host cell junction. The protein localises to the host plasmodesma. The protein resides in the host endoplasmic reticulum membrane. Its subcellular location is the host cytoplasm. It localises to the host cytoskeleton. Its function is as follows. Participates in the transport of viral genome to neighboring plant cells directly through plasmodesmata, without any budding. TGBp2 and TGBp3 are necessary for intracellular delivery of TGBp1-containing vRNPs to plasmodesmata. Can gate plasmodesmata and increase their size exclusion limit. Induces host actin cytoskeleton network thickening, which probably plays a major role in virus cell-to-cell movement. This Arachis hypogaea (Peanut) protein is Movement protein TGB3.